The sequence spans 798 residues: Type 2 DNA topoisomerase 6 subunit B (798 aa).

Residues Asn60, Asp91, 112 to 113, and 122 to 129 each bind ATP; these read SR and GQQGIGIS. Over residues 221 to 233 the composition is skewed to basic and acidic residues; sequence EPEDSFKSERATE. The disordered stretch occupies residues 221–245; the sequence is EPEDSFKSERATEELPPETEEIRPH. Lys629 is a binding site for ATP.

It belongs to the TOP6B family. As to quaternary structure, homodimer. Heterotetramer of two Top6A and two Top6B chains.

The enzyme catalyses ATP-dependent breakage, passage and rejoining of double-stranded DNA.. Functionally, relaxes both positive and negative superturns and exhibits a strong decatenase activity. This chain is Type 2 DNA topoisomerase 6 subunit B, found in Natronomonas pharaonis (strain ATCC 35678 / DSM 2160 / CIP 103997 / JCM 8858 / NBRC 14720 / NCIMB 2260 / Gabara) (Halobacterium pharaonis).